The primary structure comprises 1258 residues: Ice nucleation protein (1258 aa).

The segment at 162 to 1217 (ATYGSTLSGT…LTAGENSVLI (1056 aa)) is octapeptide periodicity. Disordered regions lie at residues 260 to 287 (YGSTQTAGEDSSLTAGYGSTQTAQKGSD), 311 to 342 (TQTAGEESTQTAGYGSTQTAQKGSDLTAGYGS), 356 to 383 (YGSTQTAGEDSSLTAGYGSTQTAQKGSD), 407 to 438 (TQTAGEESTQTAGYGSTQTAQKGSDLTAGYGS), and 452 to 480 (YGSTQTAGEDSSLTAGYGSTQTAQKGSDL). Polar residues-rich tracts occupy residues 261-286 (GSTQTAGEDSSLTAGYGSTQTAQKGS), 311-334 (TQTAGEESTQTAGYGSTQTAQKGS), 357-382 (GSTQTAGEDSSLTAGYGSTQTAQKGS), 407-430 (TQTAGEESTQTAGYGSTQTAQKGS), and 453-480 (GSTQTAGEDSSLTAGYGSTQTAQKGSDL).

Belongs to the bacterial ice nucleation protein family.

The protein localises to the cell outer membrane. Functionally, ice nucleation proteins enable bacteria to nucleate crystallization in supercooled water. This Enterobacter agglomerans (Erwinia herbicola) protein is Ice nucleation protein (iceE).